Reading from the N-terminus, the 1093-residue chain is Regulator of nonsense transcripts 1 homolog (1093 aa).

The segment at 42 to 79 (YGVYGGRGPRGNGRRRHDDDDNETEVLDDDDDESLASV) is disordered. Positions 61–75 (DDNETEVLDDDDDES) are enriched in acidic residues. In terms of domain architecture, Upf1 CH-rich spans 95-252 (EKELPPHACA…AKLEEMWKEA (158 aa)). The Zn(2+) site is built by Cys-103, Cys-106, Cys-117, Cys-120, Cys-125, His-135, His-139, His-145, Cys-163, Cys-166, Cys-189, and Cys-193. Residues 103–135 (CAYCGIHSPSSVVKCLTCNKWFCSAKGSAFSSH) are C3H. The segment at 117 to 145 (CLTCNKWFCSAKGSAFSSHIVNHLVRARH) is CC/SHH/C. The tract at residues 163 to 193 (CYNCGTKNVFILGFIPAKSDTVVVLLCRQPC) is C4. Residues Gln-460, 480 to 484 (GTGKT), Gln-650, Tyr-687, and Glu-818 each bind ATP.

This sequence belongs to the DNA2/NAM7 helicase family.

The protein resides in the cytoplasm. The catalysed reaction is ATP + H2O = ADP + phosphate + H(+). Functionally, RNA-dependent helicase required for nonsense-mediated decay (NMD) of aberrant mRNAs containing premature stop codons and modulates the expression level of normal mRNAs. Also capable of unwinding double-stranded DNA and translocating on single-stranded DNA. This chain is Regulator of nonsense transcripts 1 homolog, found in Neurospora crassa (strain ATCC 24698 / 74-OR23-1A / CBS 708.71 / DSM 1257 / FGSC 987).